The chain runs to 461 residues: Cysteine--tRNA ligase (461 aa).

Cys-29 is a Zn(2+) binding site. Residues 31 to 41 (MTVYDFCHIGH) carry the 'HIGH' region motif. Positions 210, 235, and 239 each coordinate Zn(2+). A 'KMSKS' region motif is present at residues 267 to 271 (KMSKS). Lys-270 contacts ATP.

The protein belongs to the class-I aminoacyl-tRNA synthetase family. Monomer. Zn(2+) is required as a cofactor.

It is found in the cytoplasm. It catalyses the reaction tRNA(Cys) + L-cysteine + ATP = L-cysteinyl-tRNA(Cys) + AMP + diphosphate. This Stutzerimonas stutzeri (strain A1501) (Pseudomonas stutzeri) protein is Cysteine--tRNA ligase.